A 244-amino-acid polypeptide reads, in one-letter code: Protein crossbronx (244 aa).

The UBC core domain occupies 20–176; that stretch reads QQEYKILAEY…VQENIKESKE (157 aa). Residues 209 to 244 are disordered; it reads AGRSKQTEPSAQQGNGGHATGLSWVKEGEFKPLSIE.

Belongs to the ubiquitin-conjugating enzyme family. FTS subfamily.

The sequence is that of Protein crossbronx (cbx) from Drosophila sechellia (Fruit fly).